A 169-amino-acid chain; its full sequence is uncharacterized protein (169 aa).

Residue S165 is modified to Phosphoserine.

This is an uncharacterized protein from Drosophila melanogaster (Fruit fly).